A 226-amino-acid polypeptide reads, in one-letter code: Uridylate kinase (226 aa).

Residue 9–13 participates in ATP binding; the sequence is KVSGK. Gly46 is a UMP binding site. Residues Gly47 and Arg51 each coordinate ATP. Residues Asp68 and 116 to 122 each bind UMP; that span reads FQPGQST. 3 residues coordinate ATP: Thr142, Tyr148, and Asp151.

The protein belongs to the UMP kinase family. As to quaternary structure, homohexamer.

It localises to the cytoplasm. It catalyses the reaction UMP + ATP = UDP + ADP. Its pathway is pyrimidine metabolism; CTP biosynthesis via de novo pathway; UDP from UMP (UMPK route): step 1/1. Inhibited by UTP. Catalyzes the reversible phosphorylation of UMP to UDP. In Hyperthermus butylicus (strain DSM 5456 / JCM 9403 / PLM1-5), this protein is Uridylate kinase.